We begin with the raw amino-acid sequence, 272 residues long: RELT-like protein 1 (272 aa).

The first 23 residues, 1-23 (MALWGLPGSAVLAASVFVGGAVS), serve as a signal peptide directing secretion. The Extracellular segment spans residues 24 to 58 (SPLVAADNTGSHTLHSRAETTPSSPTNNPGNGHPE). Residues 33–52 (GSHTLHSRAETTPSSPTNNP) form a disordered region. Residues 59–79 (YIAYVLVPVFFVMGLLGVLIC) traverse the membrane as a helical segment. Over 80 to 272 (HLLKKKGYRC…PVKRERSDTE (193 aa)) the chain is Cytoplasmic. Positions 90-114 (TTEAEQEVEEEKVEKIELNDSINEN) form a coiled coil. 2 positions are modified to phosphoserine: S110 and S115. Disordered stretches follow at residues 146–171 (DIES…PGAT) and 235–272 (EHKS…SDTE). Pro residues predominate over residues 156–166 (PGSPPVSPGPL). A compositionally biased stretch (basic and acidic residues) spans 235-245 (EHKSNQKERRS). S245 and S248 each carry phosphoserine.

It belongs to the RELT family. As to quaternary structure, interacts with RELT, RELL2, OXSR1 and PLSCR1.

The protein localises to the cell membrane. In terms of biological role, induces activation of MAPK14/p38 cascade, when overexpressed. Induces apoptosis, when overexpressed. The protein is RELT-like protein 1 (Rell1) of Mus musculus (Mouse).